The sequence spans 461 residues: D-arabinono-1,4-lactone oxidase (461 aa).

The 171-residue stretch at 24-194 (FSAISLGLRC…VDITISVVPA (171 aa)) folds into the FAD-binding PCMH-type domain. Residue His61 is modified to Pros-8alpha-FAD histidine.

The protein belongs to the oxygen-dependent FAD-linked oxidoreductase family. It depends on FAD as a cofactor.

It is found in the mitochondrion membrane. The enzyme catalyses D-arabinono-1,4-lactone + O2 = dehydro-D-arabinono-1,4-lactone + H2O2 + H(+). The protein operates within cofactor biosynthesis; D-erythroascorbate biosynthesis; dehydro-D-arabinono-1,4-lactone from D-arabinose: step 2/2. This chain is D-arabinono-1,4-lactone oxidase (alo1), found in Schizosaccharomyces pombe (strain 972 / ATCC 24843) (Fission yeast).